The sequence spans 186 residues: dCTP deaminase (186 aa).

Residue 107–112 participates in dCTP binding; the sequence is KSTYAR. E133 serves as the catalytic Proton donor/acceptor. Residues Q152, Y166, and Q176 each coordinate dCTP.

The protein belongs to the dCTP deaminase family. Homotrimer.

The catalysed reaction is dCTP + H2O + H(+) = dUTP + NH4(+). It functions in the pathway pyrimidine metabolism; dUMP biosynthesis; dUMP from dCTP (dUTP route): step 1/2. Catalyzes the deamination of dCTP to dUTP. The protein is dCTP deaminase of Campylobacter jejuni subsp. doylei (strain ATCC BAA-1458 / RM4099 / 269.97).